Consider the following 503-residue polypeptide: ATP synthase subunit beta (503 aa).

ATP is bound at residue 157-164; the sequence is GGAGVGKT.

It belongs to the ATPase alpha/beta chains family. F-type ATPases have 2 components, CF(1) - the catalytic core - and CF(0) - the membrane proton channel. CF(1) has five subunits: alpha(3), beta(3), gamma(1), delta(1), epsilon(1). CF(0) has three main subunits: a(1), b(2) and c(9-12). The alpha and beta chains form an alternating ring which encloses part of the gamma chain. CF(1) is attached to CF(0) by a central stalk formed by the gamma and epsilon chains, while a peripheral stalk is formed by the delta and b chains.

It localises to the cell inner membrane. The enzyme catalyses ATP + H2O + 4 H(+)(in) = ADP + phosphate + 5 H(+)(out). Its function is as follows. Produces ATP from ADP in the presence of a proton gradient across the membrane. The catalytic sites are hosted primarily by the beta subunits. In Flavobacterium psychrophilum (strain ATCC 49511 / DSM 21280 / CIP 103535 / JIP02/86), this protein is ATP synthase subunit beta.